We begin with the raw amino-acid sequence, 155 residues long: Mitochondrial import protein 1 (155 aa).

The protein belongs to the MIM1 family.

It is found in the mitochondrion outer membrane. Its function is as follows. Required for the assembly of the TOM (translocase of outer membrane) receptor complex, which is responsible for the recognition and translocation of cytosolically synthesized mitochondrial preproteins. The chain is Mitochondrial import protein 1 from Eremothecium gossypii (strain ATCC 10895 / CBS 109.51 / FGSC 9923 / NRRL Y-1056) (Yeast).